A 506-amino-acid polypeptide reads, in one-letter code: Cytochrome P450 4B1 (506 aa).

E310 lines the heme pocket. The residue at position 431 (S431) is a Phosphoserine. C448 provides a ligand contact to heme.

It belongs to the cytochrome P450 family. Heme is required as a cofactor.

Its subcellular location is the endoplasmic reticulum membrane. The protein localises to the microsome membrane. The catalysed reaction is an organic molecule + reduced [NADPH--hemoprotein reductase] + O2 = an alcohol + oxidized [NADPH--hemoprotein reductase] + H2O + H(+). Cytochromes P450 are a group of heme-thiolate monooxygenases. In liver microsomes, this enzyme is involved in an NADPH-dependent electron transport pathway. It oxidizes a variety of structurally unrelated compounds, including steroids, fatty acids, and xenobiotics. The chain is Cytochrome P450 4B1 (CYP4B1) from Oryctolagus cuniculus (Rabbit).